A 321-amino-acid polypeptide reads, in one-letter code: Cytochrome c biogenesis protein CcsA (321 aa).

7 helical membrane-spanning segments follow: residues 9 to 29, 44 to 64, 68 to 88, 143 to 163, 226 to 246, 260 to 274, and 289 to 309; these read ILTHISFSTISIVITIHLITL, GMIATFFCITGFLVSRWASSG, LSNLYESLIFLSWALYILHMI, MLLSYATLLCGSLLSAALLMI, VISLGFTLLTIGILCGAVWAN, TWAFITWTIFAIYLH, and VASIGFLIIWICYFGINLLGI.

It belongs to the CcmF/CycK/Ccl1/NrfE/CcsA family. In terms of assembly, may interact with Ccs1.

It localises to the plastid. Its subcellular location is the chloroplast thylakoid membrane. In terms of biological role, required during biogenesis of c-type cytochromes (cytochrome c6 and cytochrome f) at the step of heme attachment. This Oryza sativa subsp. indica (Rice) protein is Cytochrome c biogenesis protein CcsA.